The primary structure comprises 939 residues: UvrABC system protein A (939 aa).

Glycine 32 to serine 39 contributes to the ATP binding site. The C4-type zinc finger occupies cysteine 252–cysteine 279. ABC transporter domains follow at residues tryptophan 309–isoleucine 588 and alanine 608–lysine 936. Glycine 640–serine 647 contacts ATP. The segment at cysteine 739–cysteine 765 adopts a C4-type zinc-finger fold.

The protein belongs to the ABC transporter superfamily. UvrA family. As to quaternary structure, forms a heterotetramer with UvrB during the search for lesions.

It localises to the cytoplasm. In terms of biological role, the UvrABC repair system catalyzes the recognition and processing of DNA lesions. UvrA is an ATPase and a DNA-binding protein. A damage recognition complex composed of 2 UvrA and 2 UvrB subunits scans DNA for abnormalities. When the presence of a lesion has been verified by UvrB, the UvrA molecules dissociate. The chain is UvrABC system protein A from Clostridium acetobutylicum (strain ATCC 824 / DSM 792 / JCM 1419 / IAM 19013 / LMG 5710 / NBRC 13948 / NRRL B-527 / VKM B-1787 / 2291 / W).